Reading from the N-terminus, the 915-residue chain is Probable dipeptidyl-aminopeptidase B (915 aa).

2 disordered regions span residues 1-20 (MAGEKGGSRDEEREPLTRGS) and 52-74 (QDSRLGEKDQRDDDHDQYRNEEE). The Cytoplasmic segment spans residues 1 to 95 (MAGEKGGSRD…GGKTVQKTTK (95 aa)). Basic and acidic residues predominate over residues 55-72 (RLGEKDQRDDDHDQYRNE). A helical; Signal-anchor for type II membrane protein membrane pass occupies residues 96–116 (IVLWALLFLCVGGWSLAFVIF). Topologically, residues 117 to 915 (LFRGHDTPQT…RAETWGGLPV (799 aa)) are vacuolar. N-linked (GlcNAc...) asparagine glycosylation is found at asparagine 133, asparagine 179, asparagine 349, and asparagine 572. The active-site Charge relay system is the serine 754. The N-linked (GlcNAc...) asparagine glycan is linked to asparagine 813. Residues aspartate 831 and histidine 864 each act as charge relay system in the active site. N-linked (GlcNAc...) asparagine glycosylation occurs at asparagine 900.

It belongs to the peptidase S9B family.

It localises to the vacuole membrane. The enzyme catalyses Release of an N-terminal dipeptide, Xaa-Yaa-|-Zaa-, from a polypeptide, preferentially when Yaa is Pro, provided Zaa is neither Pro nor hydroxyproline.. In terms of biological role, type IV dipeptidyl-peptidase which removes N-terminal dipeptides sequentially from polypeptides having unsubstituted N-termini provided that the penultimate residue is proline. The chain is Probable dipeptidyl-aminopeptidase B (DAPB) from Blastomyces gilchristii (strain SLH14081) (Blastomyces dermatitidis).